Consider the following 236-residue polypeptide: Ribonuclease HII (236 aa).

Residues 27–219 (RILCGVDEAG…VRRALDGAPP (193 aa)) enclose the RNase H type-2 domain. Residues Asp33, Glu34, and Asp128 each coordinate a divalent metal cation. Positions 212-236 (RALDGAPPPAGDAVPQTDAKTAWAD) are disordered.

Belongs to the RNase HII family. Mn(2+) serves as cofactor. It depends on Mg(2+) as a cofactor.

It localises to the cytoplasm. The catalysed reaction is Endonucleolytic cleavage to 5'-phosphomonoester.. Its function is as follows. Endonuclease that specifically degrades the RNA of RNA-DNA hybrids. In Ralstonia nicotianae (strain ATCC BAA-1114 / GMI1000) (Ralstonia solanacearum), this protein is Ribonuclease HII.